Here is a 303-residue protein sequence, read N- to C-terminus: Porphobilinogen deaminase (303 aa).

Position 241 is an S-(dipyrrolylmethanemethyl)cysteine (Cys-241).

It belongs to the HMBS family. Monomer. Requires dipyrromethane as cofactor.

It carries out the reaction 4 porphobilinogen + H2O = hydroxymethylbilane + 4 NH4(+). The protein operates within porphyrin-containing compound metabolism; protoporphyrin-IX biosynthesis; coproporphyrinogen-III from 5-aminolevulinate: step 2/4. It participates in porphyrin-containing compound metabolism; chlorophyll biosynthesis. Tetrapolymerization of the monopyrrole PBG into the hydroxymethylbilane pre-uroporphyrinogen in several discrete steps. In Roseiflexus sp. (strain RS-1), this protein is Porphobilinogen deaminase.